Here is a 156-residue protein sequence, read N- to C-terminus: Myosin regulatory light chain, striated adductor muscle (156 aa).

A Blocked amino end (Ala) modification is found at Ala-1. 2 consecutive EF-hand domains span residues 15-50 and 84-119; these read KQIQ…LGRT and DSEE…MGDN. Ca(2+)-binding residues include Asp-28, Asp-30, Asp-32, and Asp-39.

Its function is as follows. In molluscan muscle, calcium regulation is associated with myosin rather than with actin. Muscle myosin contains two types of light chains: the catalytic light chain, essential for ATPase activity, and the regulatory light chain, a calcium-binding protein responsible for Ca(2+) dependent binding and Ca(2+) dependent Mg-ATPase activity. The polypeptide is Myosin regulatory light chain, striated adductor muscle (Chlamys nipponensis akazara (Akazara scallop)).